A 738-amino-acid chain; its full sequence is Translation initiation factor IF-2 (738 aa).

A compositionally biased stretch (polar residues) spans 1 to 10 (MNSMRISGHQ). A disordered region spans residues 1-150 (MNSMRISGHQ…PTTVRAPVRP (150 aa)). Over residues 22-102 (AGGGRGPGNP…GGRGPSGGRG (81 aa)) the composition is skewed to gly residues. Basic and acidic residues predominate over residues 103–120 (GDGRRREESPTDHEDGRI). The segment covering 121–143 (NRSGRSTSTTTTRTSSTLARPTT) has biased composition (low complexity). The tr-type G domain maps to 238-405 (PRPPVVTIMG…MILLVADLNE (168 aa)). Positions 247 to 254 (GHVDHGKT) are G1. GTP is bound at residue 247 to 254 (GHVDHGKT). The G2 stretch occupies residues 272 to 276 (GITQH). The segment at 293 to 296 (DTPG) is G3. Residues 293–297 (DTPGH) and 347–350 (NKID) contribute to the GTP site. The G4 stretch occupies residues 347-350 (NKID). Residues 383–385 (SAK) are G5.

This sequence belongs to the TRAFAC class translation factor GTPase superfamily. Classic translation factor GTPase family. IF-2 subfamily.

The protein localises to the cytoplasm. In terms of biological role, one of the essential components for the initiation of protein synthesis. Protects formylmethionyl-tRNA from spontaneous hydrolysis and promotes its binding to the 30S ribosomal subunits. Also involved in the hydrolysis of GTP during the formation of the 70S ribosomal complex. The protein is Translation initiation factor IF-2 of Roseiflexus castenholzii (strain DSM 13941 / HLO8).